Here is a 339-residue protein sequence, read N- to C-terminus: MVIQRNWQSLIKPEKLDVEPGNEPSRIATIVAEPLERGFGMTLGNAIRRILLSSLQGAAVTAVQIDGVLHEFSSVAGVREDVTDIVLNIKQLALRMHGEGPKRMMLTATGPGEVTAGQIQAGHDIEIMNPDLVLCTLDDGVKLGMEFTVNLGKGYVPASQNRQEDSPIGLIPIDAIYSPVRRVSYKVEPTRVGQVTDYDKLLLTVETNGAVTPEDSVALAARILQDQLQLFINFEEPQQVRHDEPQDDLPFNRNLLRKVDELELSVRSANCLKNDNIVYIGDLVQKSEQEMLRTPNFGRKSLNEIKEVLANMGLSLGMSVSGWPPENIEDLAKRLEEPF.

An alpha N-terminal domain (alpha-NTD) region spans residues 1 to 235 (MVIQRNWQSL…DQLQLFINFE (235 aa)). Residues 251-339 (FNRNLLRKVD…DLAKRLEEPF (89 aa)) form an alpha C-terminal domain (alpha-CTD) region.

Belongs to the RNA polymerase alpha chain family. Homodimer. The RNAP catalytic core consists of 2 alpha, 1 beta, 1 beta' and 1 omega subunit. When a sigma factor is associated with the core the holoenzyme is formed, which can initiate transcription.

The catalysed reaction is RNA(n) + a ribonucleoside 5'-triphosphate = RNA(n+1) + diphosphate. Functionally, DNA-dependent RNA polymerase catalyzes the transcription of DNA into RNA using the four ribonucleoside triphosphates as substrates. The polypeptide is DNA-directed RNA polymerase subunit alpha (Granulibacter bethesdensis (strain ATCC BAA-1260 / CGDNIH1)).